The sequence spans 439 residues: Trigger factor (439 aa).

The PPIase FKBP-type domain maps to 170–255 (GDTVVIDFDG…IHELKKLETP (86 aa)).

The protein belongs to the FKBP-type PPIase family. Tig subfamily.

It is found in the cytoplasm. It carries out the reaction [protein]-peptidylproline (omega=180) = [protein]-peptidylproline (omega=0). Functionally, involved in protein export. Acts as a chaperone by maintaining the newly synthesized protein in an open conformation. Functions as a peptidyl-prolyl cis-trans isomerase. The sequence is that of Trigger factor from Oenococcus oeni (strain ATCC BAA-331 / PSU-1).